The sequence spans 1207 residues: Ras GTPase-activating protein gap-2 (1207 aa).

Disordered stretches follow at residues Met-1 to Lys-29 and Arg-221 to Arg-316. In terms of domain architecture, PH spans Pro-40 to Asn-383. Residues Ser-223–Ser-236 are compositionally biased toward low complexity. Composition is skewed to polar residues over residues Thr-237–Tyr-247 and Ala-286–Tyr-297. One can recognise a C2 domain in the interval Trp-374–Tyr-490. Over residues Ser-495 to Ile-504 the composition is skewed to polar residues. The segment at Ser-495 to Glu-516 is disordered. Residues Asn-579 to Ile-789 form the Ras-GAP domain. 4 disordered regions span residues Gly-856–Ser-903, Phe-923–Ser-1013, Ala-1086–Arg-1107, and Leu-1163–Asn-1207. Composition is skewed to polar residues over residues Met-862 to Gln-876 and Thr-891 to Ser-903. A compositionally biased stretch (low complexity) spans Thr-939 to Ser-953. The segment covering Glu-955 to Arg-972 has biased composition (basic and acidic residues). Over residues Ala-985 to Ser-1013 the composition is skewed to low complexity. Positions Ser-1181–Asn-1207 are enriched in low complexity.

As to expression, mainly expressed in gonads and vulval cells. Isoform c in expressed in pharyngeal epithelial cells and several rectal/blast cells in the tail region. Isoform f is weakly expressed in four cells symmetrically located in the vulval region. Isoform g is strongly expressed in the pharyngeal muscle cells m6 in addition to several cells in the tail region.

It localises to the cytoplasm. Functionally, GTPase-activating protein, which acts as a negative regulator for the member of the Ras family let-60. Probably decreases the signaling activity of Ras by stimulating its intrinsic GTPase activity, thereby lowering the levels of GTP-bound, active Ras. The different isoforms may play a distinct role in specific tissues. The polypeptide is Ras GTPase-activating protein gap-2 (gap-2) (Caenorhabditis elegans).